The chain runs to 241 residues: Phosphoribosylaminoimidazole-succinocarboxamide synthase (241 aa).

The protein belongs to the SAICAR synthetase family.

The enzyme catalyses 5-amino-1-(5-phospho-D-ribosyl)imidazole-4-carboxylate + L-aspartate + ATP = (2S)-2-[5-amino-1-(5-phospho-beta-D-ribosyl)imidazole-4-carboxamido]succinate + ADP + phosphate + 2 H(+). The protein operates within purine metabolism; IMP biosynthesis via de novo pathway; 5-amino-1-(5-phospho-D-ribosyl)imidazole-4-carboxamide from 5-amino-1-(5-phospho-D-ribosyl)imidazole-4-carboxylate: step 1/2. The polypeptide is Phosphoribosylaminoimidazole-succinocarboxamide synthase (purC) (Bacillus subtilis (strain 168)).